We begin with the raw amino-acid sequence, 372 residues long: Spermidine/putrescine import ATP-binding protein PotA (372 aa).

An ABC transporter domain is found at 11 to 241 (IELRSITKSY…PANLFVARFI (231 aa)). Position 43 to 50 (43 to 50 (GPSGCGKT)) interacts with ATP.

It belongs to the ABC transporter superfamily. Spermidine/putrescine importer (TC 3.A.1.11.1) family. The complex is composed of two ATP-binding proteins (PotA), two transmembrane proteins (PotB and PotC) and a solute-binding protein (PotD).

The protein resides in the cell inner membrane. The catalysed reaction is ATP + H2O + polyamine-[polyamine-binding protein]Side 1 = ADP + phosphate + polyamineSide 2 + [polyamine-binding protein]Side 1.. In terms of biological role, part of the ABC transporter complex PotABCD involved in spermidine/putrescine import. Responsible for energy coupling to the transport system. The chain is Spermidine/putrescine import ATP-binding protein PotA from Aggregatibacter actinomycetemcomitans (Actinobacillus actinomycetemcomitans).